Here is a 601-residue protein sequence, read N- to C-terminus: 3-hydroxy-3-methylglutaryl-coenzyme A reductase (601 aa).

Residues 1-34 form a disordered region; sequence MDSRRRSPTVTAKAAAGELPLAPHEGQNQQPSIP. 2 consecutive transmembrane segments (helical) span residues 36 to 58 and 86 to 106; these read SSDV…FFSV and ALAS…LDFV. Residues 107–179 form a linker region; that stretch reads QSLIYKPNNE…PLITPQNSEE (73 aa). The tract at residues 180 to 601 is catalytic; it reads DEDIIKAVVA…IASSQLESDS (422 aa). E273 serves as the catalytic Charge relay system. An N-linked (GlcNAc...) asparagine glycan is attached at N337. Catalysis depends on charge relay system residues K405 and D481. The active-site Proton donor is the H579. N583 carries N-linked (GlcNAc...) asparagine glycosylation.

It belongs to the HMG-CoA reductase family.

It localises to the endoplasmic reticulum membrane. It catalyses the reaction (R)-mevalonate + 2 NADP(+) + CoA = (3S)-3-hydroxy-3-methylglutaryl-CoA + 2 NADPH + 2 H(+). Its pathway is metabolic intermediate biosynthesis; (R)-mevalonate biosynthesis; (R)-mevalonate from acetyl-CoA: step 3/3. In terms of biological role, catalyzes the synthesis of mevalonate. The specific precursor of all isoprenoid compounds present in plants. This chain is 3-hydroxy-3-methylglutaryl-coenzyme A reductase (HMGR), found in Catharanthus roseus (Madagascar periwinkle).